Consider the following 728-residue polypeptide: Probable ubiquitin-conjugating enzyme protein 17 (728 aa).

Positions 1-17 are enriched in low complexity; sequence MSSQASQRSSSTSAVAQ. Disordered stretches follow at residues 1-23 and 123-155; these read MSSQ…RERR and SSRS…GSTR. Positions 402 to 568 constitute a UBC core domain; that stretch reads DRTKRIAKEL…IEHATLNYAI (167 aa). The active-site Glycyl thioester intermediate is the Cys-495. Disordered regions lie at residues 649–678 and 709–728; these read PFAK…EAAA and RTQP…STSS. The segment covering 658-678 has biased composition (basic and acidic residues); the sequence is SERLKREQSEKEEKQKKEAAA. The segment covering 710-728 has biased composition (polar residues); that stretch reads TQPTGDYSVPSVNEPSTSS.

Belongs to the ubiquitin-conjugating enzyme family.

In Caenorhabditis elegans, this protein is Probable ubiquitin-conjugating enzyme protein 17 (ubc-17).